We begin with the raw amino-acid sequence, 490 residues long: Myocilin (490 aa).

The first 18 residues, 1–18 (MPAVQLLLLAGLVWGAGA), serve as a signal peptide directing secretion. Positions 55 to 170 (SAIQDLQRDS…QEVARLARGQ (116 aa)) form a coiled coil. Positions 168 to 187 (RGQCPQARDTSQDVPAGSRE) are disordered. In terms of domain architecture, Olfactomedin-like spans 230–489 (GCGELVWVGQ…MVTYDIKLSK (260 aa)). Cysteines 231 and 419 form a disulfide. Ca(2+) contacts are provided by Asp-366, Asn-414, Ala-415, Ile-463, and Asp-464. The short motif at 488–490 (SKI) is the Microbody targeting signal element.

As to quaternary structure, homodimer (via N-terminus). Can also form higher oligomers. Interacts with OLFM3, FN1, NRCAM, GLDN and NFASC. Interacts (via N-terminus) with MYL2. Interacts with SFRP1, FRZB, FZD7, FZD10, FZD1 and WIF1; regulates Wnt signaling. Interacts with SNTA1; regulates muscle hypertrophy. Interacts with ERBB2 and ERBB3; activates ERBB2-ERBB3 signaling pathway. Interacts with SNCG; affects its secretion and its aggregation. In terms of processing, palmitoylated. Glycosylated. Post-translationally, undergoes a calcium-dependent proteolytic cleavage at Arg-212 by CAPN2 in the endoplasmic reticulum. The result is the production of two fragments, one of 35 kDa containing the C-terminal olfactomedin-like domain, and another of 20 kDa containing the N-terminal leucine zipper-like domain. In terms of tissue distribution, detected in eye aqueous humor (at protein level).

Its subcellular location is the secreted. It is found in the golgi apparatus. It localises to the cytoplasmic vesicle. The protein resides in the extracellular space. The protein localises to the extracellular matrix. Its subcellular location is the extracellular exosome. It is found in the mitochondrion. It localises to the mitochondrion intermembrane space. The protein resides in the mitochondrion inner membrane. The protein localises to the mitochondrion outer membrane. Its subcellular location is the rough endoplasmic reticulum. It is found in the cell projection. It localises to the cilium. The protein resides in the endoplasmic reticulum. Functionally, secreted glycoprotein regulating the activation of different signaling pathways in adjacent cells to control different processes including cell adhesion, cell-matrix adhesion, cytoskeleton organization and cell migration. Promotes substrate adhesion, spreading and formation of focal contacts. Negatively regulates cell-matrix adhesion and stress fiber assembly through Rho protein signal transduction. Modulates the organization of actin cytoskeleton by stimulating the formation of stress fibers through interactions with components of Wnt signaling pathways. Promotes cell migration through activation of PTK2 and the downstream phosphatidylinositol 3-kinase signaling. Plays a role in bone formation and promotes osteoblast differentiation in a dose-dependent manner through mitogen-activated protein kinase signaling. Mediates myelination in the peripheral nervous system through ERBB2/ERBB3 signaling. Plays a role as a regulator of muscle hypertrophy through the components of dystrophin-associated protein complex. Involved in positive regulation of mitochondrial depolarization. Plays a role in neurite outgrowth. May participate in the obstruction of fluid outflow in the trabecular meshwork. The polypeptide is Myocilin (Oryctolagus cuniculus (Rabbit)).